The sequence spans 221 residues: Transcription factor bHLH148 (221 aa).

Disordered regions lie at residues 1 to 45 and 70 to 89; these read MASL…GEIH and LNSS…GKAV. Low complexity-rich tracts occupy residues 26 to 41 and 72 to 82; these read SASS…SSVS and SSASTSSSPTA. Residues 148 to 197 form the bHLH domain; sequence KRRVSVLRLNKKSIPDVNRKVRVLGRLVPGCGKQSVPVILEEATDYIQAL.

As to quaternary structure, homodimer. Interacts with PRE3. Binds to RSA1.

The protein localises to the nucleus. BHLH transcription factor that binds DNA on specific sequence 5'-CANNTG-3' in target gene promoters. Negatively regulates brassinosteroid signaling. Together with BHLH148/RITF1, regulates the transcription of several genes involved in the detoxification of reactive oxygen species (ROS) generated by salt (NaCl) stress. Confers tolerance to salt and to the oxidative stress-inducing reagents hydrogen peroxide H(2)O(2) and methyl viologen (MV). The protein is Transcription factor bHLH148 of Arabidopsis thaliana (Mouse-ear cress).